Reading from the N-terminus, the 132-residue chain is MRAEGADHSMINLSVQQVLSLWAHGTVLRNLTEMWYWIFLWALFSSLFVHGAAGVLMFVMLQRHRQGRVISIIAVSIGFLASVTGAMITSAAVAGIYRVAGKNMAPLEALVWGVGQTVLTLIISFSRILATL.

Topologically, residues 1–37 (MRAEGADHSMINLSVQQVLSLWAHGTVLRNLTEMWYW) are extracellular. The N-linked (GlcNAc...) asparagine glycan is linked to Asn12. The chain crosses the membrane as a helical span at residues 38–58 (IFLWALFSSLFVHGAAGVLMF). The Cytoplasmic segment spans residues 59-68 (VMLQRHRQGR). A helical membrane pass occupies residues 69-89 (VISIIAVSIGFLASVTGAMIT). Residues 90 to 104 (SAAVAGIYRVAGKNM) are Extracellular-facing. The chain crosses the membrane as a helical span at residues 105–125 (APLEALVWGVGQTVLTLIISF). Over 126-132 (SRILATL) the chain is Cytoplasmic.

This sequence belongs to the TMEM170 family. Interacts with CTNNB1.

It localises to the cell membrane. The sequence is that of Transmembrane protein 170B from Mus musculus (Mouse).